The sequence spans 75 residues: Putative defensin-like protein 126 (75 aa).

Positions 1–24 (MSKSTFLFVYIILILGSMVNEIQG) are cleaved as a signal peptide. Intrachain disulfides connect Cys29–Cys73, Cys38–Cys57, Cys43–Cys67, and Cys47–Cys69.

It belongs to the DEFL family.

It is found in the secreted. This is Putative defensin-like protein 126 (LCR6) from Arabidopsis thaliana (Mouse-ear cress).